A 1786-amino-acid polypeptide reads, in one-letter code: Transcription initiation factor TFIID subunit 1b (1786 aa).

Disordered regions lie at residues 54–83 and 350–372; these read EDYDEQGGQEKEHVPVEKSFDSEEREPVVL and FGSRGSQSTNESTNKSRHHPQLL. The segment covering 61–83 has biased composition (basic and acidic residues); the sequence is GQEKEHVPVEKSFDSEEREPVVL. Polar residues predominate over residues 352 to 362; that stretch reads SRGSQSTNEST. The region spanning 574–650 is the Ubiquitin-like domain; sequence MTIVVKSLGG…VHLLRTKVHL (77 aa). Basic residues predominate over residues 1303-1313; that stretch reads MKTNKHCPKYR. Disordered stretches follow at residues 1303–1382, 1397–1471, and 1596–1634; these read MKTN…DVAA, LKIS…KDQA, and SEREEEKRRKAKQKKKLQRGILENYPPRRNDGISSESGQ. The span at 1357 to 1377 shows a compositional bias: polar residues; sequence TKISVNEATKVGDSTSKTPGS. The span at 1397-1407 shows a compositional bias: basic residues; that stretch reads LKISSKAKPKA. A compositionally biased stretch (polar residues) spans 1433–1464; it reads HNPSVSGQLLPSTETDQAASSRYTTSVPQPSL. 2 coiled-coil regions span residues 1591–1620 and 1752–1786; these read REVIRSEREEEKRRKAKQKKKLQRGILENY and LADELLVKCDRLLDEYRDELKEAEKGIVDSSDSLR. Over residues 1604–1613 the composition is skewed to basic residues; it reads RKAKQKKKLQ. In terms of domain architecture, Bromo spans 1656–1774; the sequence is KRRKKGQVGL…DEYRDELKEA (119 aa).

Belongs to the TAF1 family. In terms of assembly, component of the TFIID complex. TFIID is composed of TATA binding protein (TBP) and a number of TBP-associated factors (TAFs) whose MWs range from 14-217 kDa. Expressed in roots, shoots, leaves and inflorescences.

Its subcellular location is the nucleus. In terms of biological role, TAFs are components of the transcription factor IID (TFIID) complex that is essential for mediating regulation of RNA polymerase transcription. Core scaffold of the TFIID complex. Acts as a histone acetyltransferase involved in the light regulation of growth and gene expression. Required for H3K9, H3K27, and H4K12 acetylation on the target promoters. This chain is Transcription initiation factor TFIID subunit 1b (TAF1B), found in Arabidopsis thaliana (Mouse-ear cress).